A 1008-amino-acid polypeptide reads, in one-letter code: RNA cytidine acetyltransferase (1008 aa).

ATP contacts are provided by residues 282–291 (GRGKSAALGL) and arginine 443. In terms of domain architecture, N-acetyltransferase spans 531 to 713 (CLLGPVQRMD…VPVYLSQKSN (183 aa)). Acetyl-CoA-binding positions include 601–603 (VAT), 608–614 (QRMGYGK), and asparagine 700. Serine 907 is modified (phosphoserine). Residues 950-1008 (ALETNGTGGGSGLLSVKSGVKRLDGPIETREDGDLAAPLSKKKKKNNPKQRRSQGKSLI) form a disordered region. Residues 970 to 982 (KRLDGPIETREDG) are compositionally biased toward basic and acidic residues. Over residues 989 to 1008 (SKKKKKNNPKQRRSQGKSLI) the composition is skewed to basic residues.

The protein belongs to the RNA cytidine acetyltransferase family. NAT10 subfamily. In terms of assembly, component of the PRC1 complex (PSC, PC, PH and dRING1) in 0-12 hours Drosophila embryos. This complex is distinct from the Esc/E(z) complex, which contains many other PcG proteins like Esc, E(z), Su(z)12, HDAC1/Rpd3, Caf1-55 and probably Pho. The two complexes however cooperate and interact together during the first 3 hours of development to establish PcG silencing. Part of the small subunit (SSU) processome, composed of more than 70 proteins and the RNA chaperone small nucleolar RNA (snoRNA) U3.

Its subcellular location is the nucleus. The protein localises to the nucleolus. It catalyses the reaction a cytidine in 18S rRNA + acetyl-CoA + ATP + H2O = an N(4)-acetylcytidine in 18S rRNA + ADP + phosphate + CoA + H(+). It carries out the reaction a cytidine in tRNA + acetyl-CoA + ATP + H2O = an N(4)-acetylcytidine in tRNA + ADP + phosphate + CoA + H(+). In terms of biological role, RNA cytidine acetyltransferase with specificity toward both 18S rRNA and tRNAs. Catalyzes the formation of N(4)-acetylcytidine (ac4C) in 18S rRNA. Required for early nucleolar cleavages of precursor rRNA at sites A0, A1 and A2 during 18S rRNA synthesis. Catalyzes the formation of ac4C in serine and leucine tRNAs. Requires a tRNA-binding adapter protein for full tRNA acetyltransferase activity but not for 18S rRNA acetylation. Polycomb group (PcG) protein. PcG proteins act by forming multiprotein complexes, which are required to maintain the transcriptionally repressive state of homeotic genes throughout development. PcG proteins are not required to initiate repression, but to maintain it during later stages of development. They probably act via the methylation of histones, rendering chromatin heritably changed in its expressibility. Part of the small subunit (SSU) processome, first precursor of the small eukaryotic ribosomal subunit. During the assembly of the SSU processome in the nucleolus, many ribosome biogenesis factors, an RNA chaperone and ribosomal proteins associate with the nascent pre-rRNA and work in concert to generate RNA folding, modifications, rearrangements and cleavage as well as targeted degradation of pre-ribosomal RNA by the RNA exosome. The polypeptide is RNA cytidine acetyltransferase (l(1)G0020) (Drosophila melanogaster (Fruit fly)).